The sequence spans 355 residues: Capsular polysaccharide biosynthesis glycosyltransferase CapH (355 aa).

This sequence belongs to the glycosyltransferase group 1 family. Glycosyltransferase 4 subfamily.

Its pathway is capsule biogenesis; capsule polysaccharide biosynthesis. Its function is as follows. Required for the biosynthesis of type 1 capsular polysaccharide. The sequence is that of Capsular polysaccharide biosynthesis glycosyltransferase CapH (capH) from Staphylococcus aureus.